The following is a 512-amino-acid chain: 2-isopropylmalate synthase (512 aa).

The Pyruvate carboxyltransferase domain maps to 5-268; sequence LIIFDTTLRD…DLNIDTTHIV (264 aa). Mn(2+) is bound by residues aspartate 14, histidine 202, histidine 204, and asparagine 239. The segment at 394–512 is regulatory domain; it reads AFVSLSQHSE…SQAEKVAAQG (119 aa).

This sequence belongs to the alpha-IPM synthase/homocitrate synthase family. LeuA type 1 subfamily. Homodimer. Mn(2+) is required as a cofactor.

The protein resides in the cytoplasm. The catalysed reaction is 3-methyl-2-oxobutanoate + acetyl-CoA + H2O = (2S)-2-isopropylmalate + CoA + H(+). It functions in the pathway amino-acid biosynthesis; L-leucine biosynthesis; L-leucine from 3-methyl-2-oxobutanoate: step 1/4. Its function is as follows. Catalyzes the condensation of the acetyl group of acetyl-CoA with 3-methyl-2-oxobutanoate (2-ketoisovalerate) to form 3-carboxy-3-hydroxy-4-methylpentanoate (2-isopropylmalate). This chain is 2-isopropylmalate synthase, found in Variovorax paradoxus (strain S110).